A 105-amino-acid polypeptide reads, in one-letter code: Pyrimidine/purine nucleoside phosphorylase (105 aa).

The protein belongs to the nucleoside phosphorylase PpnP family.

The enzyme catalyses a purine D-ribonucleoside + phosphate = a purine nucleobase + alpha-D-ribose 1-phosphate. The catalysed reaction is adenosine + phosphate = alpha-D-ribose 1-phosphate + adenine. It carries out the reaction cytidine + phosphate = cytosine + alpha-D-ribose 1-phosphate. It catalyses the reaction guanosine + phosphate = alpha-D-ribose 1-phosphate + guanine. The enzyme catalyses inosine + phosphate = alpha-D-ribose 1-phosphate + hypoxanthine. The catalysed reaction is thymidine + phosphate = 2-deoxy-alpha-D-ribose 1-phosphate + thymine. It carries out the reaction uridine + phosphate = alpha-D-ribose 1-phosphate + uracil. It catalyses the reaction xanthosine + phosphate = alpha-D-ribose 1-phosphate + xanthine. In terms of biological role, catalyzes the phosphorolysis of diverse nucleosides, yielding D-ribose 1-phosphate and the respective free bases. Can use uridine, adenosine, guanosine, cytidine, thymidine, inosine and xanthosine as substrates. Also catalyzes the reverse reactions. This chain is Pyrimidine/purine nucleoside phosphorylase, found in Ralstonia pickettii (strain 12J).